A 350-amino-acid chain; its full sequence is Casein kinase II subunit alpha' (350 aa).

Tyrosine 13 is subject to Phosphotyrosine. A phosphoserine mark is found at serine 18 and serine 21. A Protein kinase domain is found at 40 to 325 (YQLVRKLGRG…AKEAMEHPYF (286 aa)). Residues 46–54 (LGRGKYSEV) and lysine 69 contribute to the ATP site. At lysine 97 the chain carries N6-acetyllysine. Catalysis depends on aspartate 157, which acts as the Proton acceptor. Serine 288 carries the phosphoserine modification.

The protein belongs to the protein kinase superfamily. Ser/Thr protein kinase family. CK2 subfamily. As to quaternary structure, heterotetramer composed of two catalytic subunits (alpha chain and/or alpha' chain) and two regulatory subunits (beta chains). The tetramer can exist as a combination of 2 alpha/2 beta, 2 alpha'/2 beta or 1 alpha/1 alpha'/2 beta subunits. Also part of a CK2-SPT16-SSRP1 complex composed of SSRP1, SUPT16H, CSNK2A1, CSNK2A2 and CSNK2B, which forms following UV irradiation. Interacts with RNPS1. Interacts with CSNK2A2IP (via C-terminus). Interacts with SIRT6; preventing CSNK2A2 localization to the nucleus. Interacts with HIRIP3. In terms of tissue distribution, highly expressed in brain, testis and mature epididymal spermatozoa. Weakly expressed in kidney, liver, lung, spleen and thymus (at protein level).

It localises to the nucleus. It is found in the cytoplasm. The enzyme catalyses L-seryl-[protein] + ATP = O-phospho-L-seryl-[protein] + ADP + H(+). It catalyses the reaction L-threonyl-[protein] + ATP = O-phospho-L-threonyl-[protein] + ADP + H(+). With respect to regulation, constitutively active protein kinase whose activity is not directly affected by phosphorylation. Seems to be regulated by level of expression and localization. Catalytic subunit of a constitutively active serine/threonine-protein kinase complex that phosphorylates a large number of substrates containing acidic residues C-terminal to the phosphorylated serine or threonine. Regulates numerous cellular processes, such as cell cycle progression, apoptosis and transcription, as well as viral infection. May act as a regulatory node which integrates and coordinates numerous signals leading to an appropriate cellular response. During mitosis, functions as a component of the p53/TP53-dependent spindle assembly checkpoint (SAC) that maintains cyclin-B-CDK1 activity and G2 arrest in response to spindle damage. Also required for p53/TP53-mediated apoptosis, phosphorylating 'Ser-392' of p53/TP53 following UV irradiation. Phosphorylates a number of DNA repair proteins in response to DNA damage, such as MDC1, RAD9A, RAD51 and HTATSF1, promoting their recruitment to DNA damage sites. Can also negatively regulate apoptosis. Phosphorylates the caspases CASP9 and CASP2 and the apoptotic regulator NOL3. Phosphorylation protects CASP9 from cleavage and activation by CASP8, and inhibits the dimerization of CASP2 and activation of CASP8. Regulates transcription by direct phosphorylation of RNA polymerases I, II, III and IV. Also phosphorylates and regulates numerous transcription factors including NF-kappa-B, STAT1, CREB1, IRF1, IRF2, ATF1, SRF, MAX, JUN, FOS, MYC and MYB. Phosphorylates Hsp90 and its co-chaperones FKBP4 and CDC37, which is essential for chaperone function. Regulates Wnt signaling by phosphorylating CTNNB1 and the transcription factor LEF1. Acts as an ectokinase that phosphorylates several extracellular proteins. May phosphorylate histone H2A on 'Ser-1'. The polypeptide is Casein kinase II subunit alpha' (Csnk2a2) (Mus musculus (Mouse)).